A 136-amino-acid chain; its full sequence is Small ribosomal subunit protein uS9 (136 aa).

The segment at 111–136 (TRDPRMKERKKTGQPGARKRFQFSKR) is disordered. The segment covering 117-136 (KERKKTGQPGARKRFQFSKR) has biased composition (basic residues).

The protein belongs to the universal ribosomal protein uS9 family.

The protein is Small ribosomal subunit protein uS9 of Methylacidiphilum infernorum (isolate V4) (Methylokorus infernorum (strain V4)).